The primary structure comprises 170 residues: 6,7-dimethyl-8-ribityllumazine synthase (170 aa).

Residues tryptophan 25, 57 to 59 (AVE), and 79 to 81 (AVI) each bind 5-amino-6-(D-ribitylamino)uracil. 84–85 (DT) contacts (2S)-2-hydroxy-3-oxobutyl phosphate. Histidine 87 serves as the catalytic Proton donor. A 5-amino-6-(D-ribitylamino)uracil-binding site is contributed by asparagine 112. Position 126 (arginine 126) interacts with (2S)-2-hydroxy-3-oxobutyl phosphate.

The protein belongs to the DMRL synthase family.

It carries out the reaction (2S)-2-hydroxy-3-oxobutyl phosphate + 5-amino-6-(D-ribitylamino)uracil = 6,7-dimethyl-8-(1-D-ribityl)lumazine + phosphate + 2 H2O + H(+). Its pathway is cofactor biosynthesis; riboflavin biosynthesis; riboflavin from 2-hydroxy-3-oxobutyl phosphate and 5-amino-6-(D-ribitylamino)uracil: step 1/2. Functionally, catalyzes the formation of 6,7-dimethyl-8-ribityllumazine by condensation of 5-amino-6-(D-ribitylamino)uracil with 3,4-dihydroxy-2-butanone 4-phosphate. This is the penultimate step in the biosynthesis of riboflavin. The polypeptide is 6,7-dimethyl-8-ribityllumazine synthase (Thermobifida fusca (strain YX)).